A 269-amino-acid polypeptide reads, in one-letter code: Hydroxyethylthiazole kinase (269 aa).

Met-45 lines the substrate pocket. ATP is bound by residues Arg-121 and Thr-167. Gly-194 serves as a coordination point for substrate.

This sequence belongs to the Thz kinase family. Mg(2+) is required as a cofactor.

The catalysed reaction is 5-(2-hydroxyethyl)-4-methylthiazole + ATP = 4-methyl-5-(2-phosphooxyethyl)-thiazole + ADP + H(+). It functions in the pathway cofactor biosynthesis; thiamine diphosphate biosynthesis; 4-methyl-5-(2-phosphoethyl)-thiazole from 5-(2-hydroxyethyl)-4-methylthiazole: step 1/1. In terms of biological role, catalyzes the phosphorylation of the hydroxyl group of 4-methyl-5-beta-hydroxyethylthiazole (THZ). This is Hydroxyethylthiazole kinase from Bacillus mycoides (strain KBAB4) (Bacillus weihenstephanensis).